The chain runs to 256 residues: MFKKLINKKNTINNYNEELDSSNIPEHIAIIMDGNGRWAKKRKMPRIKGHYEGMQTIKKITRVASDIGVKYLTLYAFSTENWSRPESEVNYIMNLPVNFLKTFLPELIEKNVKVETIGFTDKLPKSTIEAINNAKEKTANNTGLKLIFAINYGGRAELVHSIKNMFDELHQQGLNSDIIDETYINNHLMTKDYPDPELLIRTSGEQRISNFLIWQVSYSEFIFNQKLWPDFDEDELIKCIKIYQSRQRRFGGLSEE.

Asp33 is a catalytic residue. Asp33 provides a ligand contact to Mg(2+). Substrate is bound by residues 34 to 37 (GNGR), Trp38, Arg46, His50, and 78 to 80 (STE). The Proton acceptor role is filled by Asn81. Substrate is bound by residues Trp82, Arg84, Arg201, and 207–209 (RIS). Glu220 is a binding site for Mg(2+).

The protein belongs to the UPP synthase family. Homodimer. It depends on Mg(2+) as a cofactor.

In terms of biological role, catalyzes the condensation of isopentenyl diphosphate (IPP) with allylic pyrophosphates generating different type of terpenoids. This Staphylococcus aureus (strain COL) protein is Isoprenyl transferase.